Consider the following 331-residue polypeptide: RNA/RNP complex-1-interacting phosphatase (331 aa).

One can recognise a Tyrosine-protein phosphatase domain in the interval 61–208; that stretch reads FEKHLAPEEC…LRNGPIRKNW (148 aa). Catalysis depends on cysteine 152, which acts as the Phosphocysteine intermediate. Residue 153–158 participates in substrate binding; it reads THGVNR. Arginine 158 (proton donor/acceptor) is an active-site residue.

It belongs to the protein-tyrosine phosphatase family. Non-receptor class dual specificity subfamily. As to quaternary structure, monomer. May interact with SFRS7 and SFRS9/SRP30C.

The protein localises to the nucleus. The protein resides in the nucleus speckle. In terms of biological role, possesses RNA 5'-triphosphatase and diphosphatase activities, but displays a poor protein-tyrosine phosphatase activity. In addition, has phosphatase activity with ATP, ADP and O-methylfluorescein phosphate (in vitro). Binds to RNA. May participate in nuclear mRNA metabolism. The sequence is that of RNA/RNP complex-1-interacting phosphatase (DUSP11) from Bos taurus (Bovine).